The primary structure comprises 357 residues: Peptide chain release factor 1 (357 aa).

Residue Q234 is modified to N5-methylglutamine. Residues 282–313 (DSKKQEQRSNNRKQQVGSGDRSERIRTYNFPQ) are disordered.

It belongs to the prokaryotic/mitochondrial release factor family. Post-translationally, methylated by PrmC. Methylation increases the termination efficiency of RF1.

The protein localises to the cytoplasm. Peptide chain release factor 1 directs the termination of translation in response to the peptide chain termination codons UAG and UAA. The protein is Peptide chain release factor 1 of Borreliella afzelii (strain PKo) (Borrelia afzelii).